The following is a 94-amino-acid chain: Pyrimidine/purine nucleoside phosphorylase (94 aa).

This sequence belongs to the nucleoside phosphorylase PpnP family.

It carries out the reaction a purine D-ribonucleoside + phosphate = a purine nucleobase + alpha-D-ribose 1-phosphate. It catalyses the reaction adenosine + phosphate = alpha-D-ribose 1-phosphate + adenine. The catalysed reaction is cytidine + phosphate = cytosine + alpha-D-ribose 1-phosphate. The enzyme catalyses guanosine + phosphate = alpha-D-ribose 1-phosphate + guanine. It carries out the reaction inosine + phosphate = alpha-D-ribose 1-phosphate + hypoxanthine. It catalyses the reaction thymidine + phosphate = 2-deoxy-alpha-D-ribose 1-phosphate + thymine. The catalysed reaction is uridine + phosphate = alpha-D-ribose 1-phosphate + uracil. The enzyme catalyses xanthosine + phosphate = alpha-D-ribose 1-phosphate + xanthine. Its function is as follows. Catalyzes the phosphorolysis of diverse nucleosides, yielding D-ribose 1-phosphate and the respective free bases. Can use uridine, adenosine, guanosine, cytidine, thymidine, inosine and xanthosine as substrates. Also catalyzes the reverse reactions. This chain is Pyrimidine/purine nucleoside phosphorylase, found in Pseudomonas fluorescens (strain ATCC BAA-477 / NRRL B-23932 / Pf-5).